A 362-amino-acid polypeptide reads, in one-letter code: Ferrochelatase (362 aa).

Residues His228 and Glu309 each contribute to the Fe cation site.

It belongs to the ferrochelatase family.

It is found in the cytoplasm. It catalyses the reaction heme b + 2 H(+) = protoporphyrin IX + Fe(2+). It participates in porphyrin-containing compound metabolism; protoheme biosynthesis; protoheme from protoporphyrin-IX: step 1/1. Catalyzes the ferrous insertion into protoporphyrin IX. In Bordetella pertussis (strain Tohama I / ATCC BAA-589 / NCTC 13251), this protein is Ferrochelatase.